We begin with the raw amino-acid sequence, 300 residues long: MNQTYGRLVSRAAIAATAMALALLLIKIFAWWYTGSVSILAALVDSLVDIAASLTNLLVVRYSLQPADDEHTFGHGKAESLAALAQSMFISGSALFLFLTSIQNLIKPTPMNDPGVGIGVTVIALICTIILVTFQRWVVRKTQSQAVRADMLHYQSDVMMNGAILIALGLSWYGWHRADALFALGIGIYILYSALRMGYEAVQSLLDRALPDAERQEIIDIVTSWPGVSGAHDLRTRQSGPTRFIQIHLEMEDNLPLVQAHLVAEQVEQAILRRFPGSDVIIHQDPCSVVPREIKKFELV.

4 helical membrane-spanning segments follow: residues 12-32 (AAIAATAMALALLLIKIFAWW), 39-59 (ILAALVDSLVDIAASLTNLLV), 82-102 (AALAQSMFISGSALFLFLTSI), and 114-134 (PGVGIGVTVIALICTIILVTF). D45 and D49 together coordinate Zn(2+). Residues H153 and D157 each contribute to the Zn(2+) site. 2 helical membrane passes run 156–176 (SDVMMNGAILIALGLSWYGWH) and 178–198 (ADALFALGIGIYILYSALRMG).

This sequence belongs to the cation diffusion facilitator (CDF) transporter (TC 2.A.4) family. FieF subfamily. Homodimer.

Its subcellular location is the cell inner membrane. It carries out the reaction Zn(2+)(in) + H(+)(out) = Zn(2+)(out) + H(+)(in). It catalyses the reaction Cd(2+)(in) + H(+)(out) = Cd(2+)(out) + H(+)(in). The enzyme catalyses Fe(2+)(in) + H(+)(out) = Fe(2+)(out) + H(+)(in). Its function is as follows. Divalent metal cation transporter which exports Zn(2+), Cd(2+) and possibly Fe(2+). May be involved in zinc and iron detoxification by efflux. The sequence is that of Cation-efflux pump FieF from Salmonella arizonae (strain ATCC BAA-731 / CDC346-86 / RSK2980).